Consider the following 1571-residue polypeptide: Guanine nucleotide-releasing factor 2 (1571 aa).

Disordered stretches follow at residues 28–85, 202–271, and 287–316; these read LPPH…RDTN, INSG…KLAR, and MRTT…PTTE. Residues 55–73 are compositionally biased toward basic residues; it reads QLHHHHHQQHHHNHHRLWK. Over residues 74 to 83 the composition is skewed to polar residues; sequence TQRQSWSPRD. Positions 230-248 are enriched in gly residues; it reads TPGGSSRVGGAGAGGGGGV. Residues 287 to 297 are compositionally biased toward polar residues; that stretch reads MRTTNNTLGRS. Over residues 298-309 the composition is skewed to basic residues; it reads HSPHSPRTKHGT. S496 and S523 each carry phosphoserine. Disordered stretches follow at residues 513–580, 614–646, 695–719, 728–747, 776–868, and 879–898; these read HNVN…QASP, RSRS…HQHL, GEGV…ESGF, STQT…SSNS, QRHI…SEVA, and LNHH…HSKH. T524 carries the phosphothreonine modification. At S526 the chain carries Phosphoserine. Residues 532-550 show a composition bias toward pro residues; sequence SPPPKPPLPNRASNPPPLP. An SH3-binding motif is present at residues 546 to 556; the sequence is PPPLPPKRRSQ. Low complexity predominate over residues 556 to 579; sequence QPSASAGTVGVGCSSSTSTSNQAS. S615 is modified (phosphoserine). A compositionally biased stretch (polar residues) spans 620 to 631; the sequence is ENSQCSFDSALN. Low complexity predominate over residues 697–707; that stretch reads GVAAAASGDGE. A compositionally biased stretch (polar residues) spans 708-718; that stretch reads TNSNRHSNESG. Low complexity-rich tracts occupy residues 735-747 and 780-824; these read SVQS…SSNS and SSSS…DLAP. The short motif at 820-831 is the SH3-binding element; the sequence is ADLAPALPPKSI. Residues 851–866 are compositionally biased toward polar residues; the sequence is VQSSSGWASHRSSQSE. 2 consecutive short sequence motifs (SH3-binding) follow at residues 924–935 and 986–997; these read DQEPPPLPIKKK and LEMPPALPPKNY. Residues 1013–1038 form a disordered region; that stretch reads PVIVTTPPPSPKPTLGENGSTGRPDS. The 123-residue stretch at 1170 to 1292 folds into the N-terminal Ras-GEF domain; the sequence is DGPEVKGGYI…LRNKFVEKVT (123 aa). The Ras-GEF domain occupies 1339 to 1564; sequence KSLEIAEQMT…WQISEKIKPR (226 aa).

In terms of tissue distribution, ubiquitous.

Guanine nucleotide-releasing protein that binds to SH3 domain of Crk. Transduces signals from Crk to activate RAS. Also involved in MAPK activation. The chain is Guanine nucleotide-releasing factor 2 (C3G) from Drosophila melanogaster (Fruit fly).